The chain runs to 186 residues: Hydra actinoporin-like toxin 6 (186 aa).

The N-terminal stretch at 1 to 21 (MLVYVCLVVILIQLPFGAAGG) is a signal peptide. The Cell attachment site motif lies at 158 to 160 (RAG).

It belongs to the actinoporin family. HALT subfamily. In terms of assembly, octamer or nonamer in membranes. Monomer in the soluble state. In vitro, interacts with folate receptor alpha (of target organism). As to expression, expressed female germline during oogenesis.

It localises to the nematocyst. The protein localises to the secreted. Its subcellular location is the target cell membrane. Functionally, pore-forming protein that forms hydrophilic pores and causes cytolysis. Compared to equinatoxin-2 (AC P61914), it reveals lower cytolysis activity (5-12-fold difference, tested on erythrocytes), a larger pore size (probably 2-3 nm) and different affinity to membrane lipids (100-fold lower affinity to sphingomyelin). Binds to sulfatides. Shows cytolytic activity on HeLa cells, with a different potency than its paralogs (from most potent to less potent: HALT-4&gt;HALT-6~HALT-1&gt;HALT-3&gt;HALT-7&gt;HALT-2). Pore formation is a multi-step process that involves specific recognition of membrane lipid by a protein aromatic residues rich region, firm binding to the membrane (mainly driven by hydrophobic interactions) accompanied by the transfer of the N-terminal region to the lipid-water interface and finally pore formation after oligomerization of monomers. In vitro, binds to the folate receptor alpha (FOLR1), a GPI-anchored membrane protein that plays a major role in the uptake of folate/folic acid into cells via endocytosis, suggesting a possible involvement of this receptor in the mechanism of HALT-1-induced cell lysis. In vivo, does not cause visible paralysis in larvae of the blowfly Sarcophaga faculata, the most common arthropod prey of Hydra. The polypeptide is Hydra actinoporin-like toxin 6 (Hydra vulgaris (Hydra)).